A 530-amino-acid chain; its full sequence is Berberine bridge enzyme-like 4 (530 aa).

Residues 1–19 (MKGTLSVLCLVLLVSVLEA) form the signal peptide. C32 and C95 are joined by a disulfide. N52 is a glycosylation site (N-linked (GlcNAc...) asparagine). The 175-residue stretch at 73-247 (NYRKLLAIVA…LSWKINLVDV (175 aa)) folds into the FAD-binding PCMH-type domain. Positions 110 to 172 (HDYEGLSYMS…QTLAFPAGVC (63 aa)) form a cross-link, 6-(S-cysteinyl)-8alpha-(pros-histidyl)-FAD (His-Cys). N257, N292, N341, and N441 each carry an N-linked (GlcNAc...) asparagine glycan.

Belongs to the oxygen-dependent FAD-linked oxidoreductase family. Requires FAD as cofactor. In terms of processing, the FAD cofactor is bound via a bicovalent 6-S-cysteinyl, 8alpha-N1-histidyl FAD linkage.

It localises to the secreted. It is found in the cell wall. Probable flavin-dependent oxidoreductase. The chain is Berberine bridge enzyme-like 4 from Arabidopsis thaliana (Mouse-ear cress).